A 311-amino-acid chain; its full sequence is Malate dehydrogenase (311 aa).

Residues 7–13 and Asp34 each bind NAD(+); that span reads GAAGGIG. Arg81 and Arg87 together coordinate substrate. NAD(+) is bound by residues Asn94 and 117-119; that span reads ITN. Residues Asn119 and Arg153 each contribute to the substrate site. His177 acts as the Proton acceptor in catalysis. NAD(+) is bound at residue Met227.

The protein belongs to the LDH/MDH superfamily. MDH type 1 family. As to quaternary structure, homodimer.

The catalysed reaction is (S)-malate + NAD(+) = oxaloacetate + NADH + H(+). Catalyzes the reversible oxidation of malate to oxaloacetate. This Colwellia psychrerythraea (strain 34H / ATCC BAA-681) (Vibrio psychroerythus) protein is Malate dehydrogenase.